We begin with the raw amino-acid sequence, 178 residues long: Large ribosomal subunit protein uL6 (178 aa).

It belongs to the universal ribosomal protein uL6 family. As to quaternary structure, part of the 50S ribosomal subunit.

Its function is as follows. This protein binds to the 23S rRNA, and is important in its secondary structure. It is located near the subunit interface in the base of the L7/L12 stalk, and near the tRNA binding site of the peptidyltransferase center. In Helicobacter pylori (strain HPAG1), this protein is Large ribosomal subunit protein uL6.